The following is a 517-amino-acid chain: Beclin-1-like protein (517 aa).

The disordered stretch occupies residues 76–106 (LPRHKPPQSQGIPPRPRGASSPQPDATQSGK). Over residues 95–105 (SSPQPDATQSG) the composition is skewed to polar residues. The stretch at 172–266 (CLECMRVLSD…NRFNELEDRY (95 aa)) forms a coiled coil.

Belongs to the beclin family. As to quaternary structure, component of a phosphatidylinositol 3-kinase (PI3K) complex composed of ATG6, SH3P2 and FREE1. Interacts with SINAT1, SINAT2, SINAT5, SINAT6, TRAF1A and TRAF1B. Interacts with TUBB8/TUB8. Component of a complex made of VPS38/USL1 and PI3K main subunits such as VPS15, ATG6/VPS30 and VPS34. Binds directly to VPS38/USL1. Post-translationally, ubiquitinated. The interaction with SINAT1 or SINAT2, and the presence of TRAF1A/MUSE14 and TRAF1B/MUSE13, mediates its proteasome-dependent degradation. As to expression, highly expressed in mature pollen grains. Expressed in roots, leaves, stems, flowers and siliques.

The protein resides in the cytoplasm. It is found in the cytoskeleton. In terms of biological role, required for normal plant development. Required for pollen germination. Required for autophagic activity. Required to limit the pathogen-associated cell death response. May be involved in vacuolar protein sorting. Binds to microtubules. May facilitate efficient recruitment of other ATG proteins to assemble scaffolds for autophagosome biogenesis. The polypeptide is Beclin-1-like protein (Arabidopsis thaliana (Mouse-ear cress)).